Reading from the N-terminus, the 122-residue chain is Large ribosomal subunit protein uL14c (122 aa).

It belongs to the universal ribosomal protein uL14 family. As to quaternary structure, part of the 50S ribosomal subunit.

Its subcellular location is the plastid. The protein resides in the chloroplast. Functionally, binds to 23S rRNA. The chain is Large ribosomal subunit protein uL14c from Zygnema circumcarinatum (Green alga).